Here is a 342-residue protein sequence, read N- to C-terminus: MSLRTTPRSPAEPGHLPVMLAEVLTALAPADGEVIVDGTFGGGGYTTAILKAANCTVLGIDRDLDAIVRAEKMAQANPRLVPLLGCFGDLDTLAEQAGHASVDGVVLDIGVSSFQIDQADRGFSFMKDGPLDMRMGGSGPSAADVVNTMSEKGLADVIFRLGEEKNSRRIARVLVQRRVQAPFETTADLAAVVEEAVGGRRGARSHPATLTFQAIRMYVNDELGELARGLRAAERILKPGGRLVVVTFHSLEDRLVKQWLRERAGAVPGGSRHMPLMSKGPAPAFELQENKAVQPSEKEVETNPRARSAKLRAAIRTNADAALDEASDGMNLPPLAELEKSR.

Residues 43-45 (GGY), D61, F87, D108, and Q115 contribute to the S-adenosyl-L-methionine site. The interval 322–342 (ALDEASDGMNLPPLAELEKSR) is disordered.

It belongs to the methyltransferase superfamily. RsmH family.

It localises to the cytoplasm. The catalysed reaction is cytidine(1402) in 16S rRNA + S-adenosyl-L-methionine = N(4)-methylcytidine(1402) in 16S rRNA + S-adenosyl-L-homocysteine + H(+). Specifically methylates the N4 position of cytidine in position 1402 (C1402) of 16S rRNA. In Hyphomonas neptunium (strain ATCC 15444), this protein is Ribosomal RNA small subunit methyltransferase H.